A 379-amino-acid chain; its full sequence is Probable G-protein coupled receptor No18 (379 aa).

Over 5 to 36 (EASITGRTAPELNASAAPLDDERELGETVAAT) the chain is Extracellular. N-linked (GlcNAc...) asparagine glycosylation is present at asparagine 17. A helical transmembrane segment spans residues 37-58 (ALLLAIILVTIVGNSLVIISVF). Residues 59-68 (TYRPLRSVQN) are Cytoplasmic-facing. Residues 69–90 (FFVVSLAVADLTVALFVLPLNV) form a helical membrane-spanning segment. At 91–107 (AYRLLNQWLLGSYLCQM) the chain is on the extracellular side. A disulfide bond links cysteine 105 and cysteine 184. The helical transmembrane segment at 108–128 (WLTCDILCCTSSILNLCVIAL) threads the bilayer. The Cytoplasmic segment spans residues 129–148 (DRYWAITDPINYAQKRTIRR). A helical membrane pass occupies residues 149-171 (VNTMIAAVWALSLVISVPPLLGW). Residues 172-196 (NDWPAQFTEDTPCTLTQERLFVVYS) lie on the Extracellular side of the membrane. The chain crosses the membrane as a helical span at residues 197-218 (SSGSFFIPLIIMSVVYAKIFFA). At 219–303 (TKRRLRERTR…LSKERKAARV (85 aa)) the chain is on the cytoplasmic side. A disordered region spans residues 234–276 (AVPAPPQRTSSRPLAELESVASQEDETEPSPEPEPLSSRADKP). A helical membrane pass occupies residues 304 to 325 (LGVIMGVFVVCWLPFFLMYAIV). The Extracellular segment spans residues 326 to 340 (PFCTNCAPPSQRVVD). A helical transmembrane segment spans residues 341-362 (FVTWLGYVNSSLNPIIYTIYNK). Residues 363–375 (DFRTAFSRLLRCD) are Cytoplasmic-facing.

The protein belongs to the G-protein coupled receptor 1 family.

It localises to the cell membrane. In terms of biological role, probable G-protein coupled receptor for an amine. This is Probable G-protein coupled receptor No18 from Amphibalanus amphitrite (Striped barnacle).